We begin with the raw amino-acid sequence, 597 residues long: Alpha-1,2-mannosyltransferase MNN2 (597 aa).

The Cytoplasmic segment spans residues 1 to 12; that stretch reads MLLTKRFSKLFK. Residues 13–28 form a helical; Signal-anchor for type II membrane protein membrane-spanning segment; the sequence is LTFIVLILCGLFVITN. Topologically, residues 29 to 597 are extracellular; sequence KYMDENTSVK…STHDKAIAGK (569 aa). Residues Asn-34, Asn-363, and Asn-473 are each glycosylated (N-linked (GlcNAc...) asparagine).

This sequence belongs to the MNN1/MNT family. Interacts with SVP26.

The protein resides in the golgi apparatus membrane. The protein operates within protein modification; protein glycosylation. In terms of biological role, alpha-1,2-mannosyltransferase, responsible for addition of the first alpha-1,2-linked mannose to form the branches on the mannan backbone of oligosaccharides. This chain is Alpha-1,2-mannosyltransferase MNN2 (MNN2), found in Saccharomyces cerevisiae (strain ATCC 204508 / S288c) (Baker's yeast).